A 390-amino-acid polypeptide reads, in one-letter code: Formate-dependent phosphoribosylglycinamide formyltransferase (390 aa).

Residues 19-20 and Glu79 contribute to the N(1)-(5-phospho-beta-D-ribosyl)glycinamide site; that span reads EL. ATP-binding positions include Arg111, Lys152, 157 to 162, 192 to 195, and Glu200; these read SSGKGQ and EGFV. Residues 116-305 enclose the ATP-grasp domain; it reads RLAAEELGLP…EFAIHARAIL (190 aa). Positions 264 and 276 each coordinate Mg(2+). N(1)-(5-phospho-beta-D-ribosyl)glycinamide is bound by residues Asp283, Lys353, and 360 to 361; that span reads RR.

It belongs to the PurK/PurT family. Homodimer.

The catalysed reaction is N(1)-(5-phospho-beta-D-ribosyl)glycinamide + formate + ATP = N(2)-formyl-N(1)-(5-phospho-beta-D-ribosyl)glycinamide + ADP + phosphate + H(+). It participates in purine metabolism; IMP biosynthesis via de novo pathway; N(2)-formyl-N(1)-(5-phospho-D-ribosyl)glycinamide from N(1)-(5-phospho-D-ribosyl)glycinamide (formate route): step 1/1. Its function is as follows. Involved in the de novo purine biosynthesis. Catalyzes the transfer of formate to 5-phospho-ribosyl-glycinamide (GAR), producing 5-phospho-ribosyl-N-formylglycinamide (FGAR). Formate is provided by PurU via hydrolysis of 10-formyl-tetrahydrofolate. The polypeptide is Formate-dependent phosphoribosylglycinamide formyltransferase (Marinobacter nauticus (strain ATCC 700491 / DSM 11845 / VT8) (Marinobacter aquaeolei)).